The primary structure comprises 236 residues: 1-(5-phosphoribosyl)-5-[(5-phosphoribosylamino)methylideneamino] imidazole-4-carboxamide isomerase (236 aa).

Catalysis depends on Asp8, which acts as the Proton acceptor. Residue Asp129 is the Proton donor of the active site.

The protein belongs to the HisA/HisF family.

The protein localises to the cytoplasm. The enzyme catalyses 1-(5-phospho-beta-D-ribosyl)-5-[(5-phospho-beta-D-ribosylamino)methylideneamino]imidazole-4-carboxamide = 5-[(5-phospho-1-deoxy-D-ribulos-1-ylimino)methylamino]-1-(5-phospho-beta-D-ribosyl)imidazole-4-carboxamide. Its pathway is amino-acid biosynthesis; L-histidine biosynthesis; L-histidine from 5-phospho-alpha-D-ribose 1-diphosphate: step 4/9. This is 1-(5-phosphoribosyl)-5-[(5-phosphoribosylamino)methylideneamino] imidazole-4-carboxamide isomerase from Methanosphaerula palustris (strain ATCC BAA-1556 / DSM 19958 / E1-9c).